The chain runs to 208 residues: MKVVEVKHPLVRHKIGLMREADISTKRFRELAAEVGSLLTYEATADLETETVTIEGWNGPVQVEQIKGKKVTVVPILRAGLGMMDGVLEHIPSARISVVGIYRDEETLEPVPYFEKLCSQVDERIALVVDPMLATGGSMISTIDLLKQRGCKQIKALVLVAAPEGLAALEKAHPDIELYTASIDRCLNENGYILPGLGDAGDKIFGTK.

5-phospho-alpha-D-ribose 1-diphosphate-binding positions include arginine 78, arginine 103, and 130–138 (DPMLATGGS). Residues isoleucine 193 and 198–200 (GDA) contribute to the uracil site. Residue aspartate 199 coordinates 5-phospho-alpha-D-ribose 1-diphosphate.

This sequence belongs to the UPRTase family. Requires Mg(2+) as cofactor.

The catalysed reaction is UMP + diphosphate = 5-phospho-alpha-D-ribose 1-diphosphate + uracil. It participates in pyrimidine metabolism; UMP biosynthesis via salvage pathway; UMP from uracil: step 1/1. Its activity is regulated as follows. Allosterically activated by GTP. Functionally, catalyzes the conversion of uracil and 5-phospho-alpha-D-ribose 1-diphosphate (PRPP) to UMP and diphosphate. This Shewanella amazonensis (strain ATCC BAA-1098 / SB2B) protein is Uracil phosphoribosyltransferase.